The chain runs to 575 residues: Physarolisin (575 aa).

Residues 1–18 form the signal peptide; it reads MRLLSLLFLLGLATLSFA. The propeptide at 19 to 173 is removed in mature form; sequence VRSQWAQQGR…SIKNARTQVG (155 aa). In terms of domain architecture, Peptidase S53 spans 179-574; that stretch reads YIVPYVIFDL…SKLLAFVQTL (396 aa). Asn200 carries N-linked (GlcNAc...) asparagine glycosylation. Catalysis depends on charge relay system residues Glu248 and Asp252. N-linked (GlcNAc...) asparagine glycans are attached at residues Asn262, Asn307, Asn380, and Asn453. The active-site Charge relay system is Ser484. Ca(2+)-binding residues include Asp529, Ile530, Gly552, and Asp554.

It depends on Ca(2+) as a cofactor. In terms of processing, autocatalytically processed. Post-translationally, N-glycosylated.

The enzyme catalyses Milk clotting activity. Preferential cleavage of 8-Gly-|-Ser-9 in B chain of insulin most rapidly, followed by 11-Leu-|-Val-12, 19-Cys(SO(3)H)-|-Gly and 24-Phe-|-Phe-25. No action on Ac-Phe-Tyr(I)2.. Its activity is regulated as follows. Inhibited by diisopropylfluorophosphate (DFP) and diazoacetyl-D,L-norleucine methyl ester (DAN). In Physarum polycephalum (Slime mold), this protein is Physarolisin.